The sequence spans 381 residues: Alkanesulfonate monooxygenase (381 aa).

This sequence belongs to the SsuD family. As to quaternary structure, homotetramer.

It carries out the reaction an alkanesulfonate + FMNH2 + O2 = an aldehyde + FMN + sulfite + H2O + 2 H(+). Functionally, catalyzes the desulfonation of aliphatic sulfonates. This Escherichia coli O6:H1 (strain CFT073 / ATCC 700928 / UPEC) protein is Alkanesulfonate monooxygenase.